A 655-amino-acid polypeptide reads, in one-letter code: p-hydroxybenzoic acid efflux pump subunit AaeB (655 aa).

Residues Met-1–Arg-12 lie on the Periplasmic side of the membrane. The helical transmembrane segment at Phe-13 to Leu-33 threads the bilayer. Topologically, residues Glu-34–Arg-37 are cytoplasmic. The chain crosses the membrane as a helical span at residues Trp-38–Pro-58. Over Tyr-59–Met-68 the chain is Periplasmic. A helical membrane pass occupies residues Leu-69–Ile-89. Topologically, residues Arg-90 to Pro-92 are cytoplasmic. The chain crosses the membrane as a helical span at residues Leu-93–Val-113. The Periplasmic portion of the chain corresponds to Arg-114–Ala-120. A helical transmembrane segment spans residues Trp-121–Leu-141. The Cytoplasmic segment spans residues Thr-142 to Ser-151. Residues Glu-152–Ile-172 form a helical membrane-spanning segment. At Lys-173–Thr-369 the chain is on the periplasmic side. Residues Leu-370–Val-390 form a helical membrane-spanning segment. Over Thr-391–Asp-406 the chain is Cytoplasmic. Residues Phe-407–Pro-427 form a helical membrane-spanning segment. The Periplasmic segment spans residues Asn-428–Gln-430. Residues Gln-431–Val-451 form a helical membrane-spanning segment. The Cytoplasmic portion of the chain corresponds to Gln-452 to Ser-458. A helical transmembrane segment spans residues Met-459 to Phe-479. Residues Ser-480–Gln-481 lie on the Periplasmic side of the membrane. A helical transmembrane segment spans residues Phe-482–Leu-502. Residues Val-503–Ser-655 lie on the Cytoplasmic side of the membrane.

The protein belongs to the aromatic acid exporter ArAE (TC 2.A.85) family.

Its subcellular location is the cell inner membrane. In terms of biological role, forms an efflux pump with AaeA. Could function as a metabolic relief valve, allowing to eliminate certain compounds when they accumulate to high levels in the cell. In Salmonella paratyphi A (strain ATCC 9150 / SARB42), this protein is p-hydroxybenzoic acid efflux pump subunit AaeB.